The sequence spans 149 residues: SPbeta prophage-derived putative transcriptional regulator YosT (149 aa).

The protein is SPbeta prophage-derived putative transcriptional regulator YosT (yosT) of Bacillus subtilis (strain 168).